The chain runs to 324 residues: MMSQQDLPTLFYSGKSNSAVPIISESELQTITAEPWLEISKKGLQLEGLNFDRQGQLFLLDVFEGNIFKINPETKEIKRPFVSHKANPAAIKIHKDGRLFVCYLGDFKSTGGIFAATENGDNLQDIIEDLSTAYCIDDMVFDSKGGFYFTDFRGYSTNPLGGVYYVSPDFRTVTPIIQNISVANGIALSTDEKVLWVTETTANRLHRIALEDDGVTIQPFGATIPYYFTGHEGPDSCCIDSDDNLYVAMYGQGRVLVFNKRGYPIGQILIPGRDEGHMLRSTHPQFIPGTNQLIICSNDIEMGGGSMLYTVNGFAKGHQSFQFQ.

Residues Glu-47, Ser-109, Gly-111, Asp-129, Thr-132, Tyr-134, Asp-137, Asn-184, Asp-235, and Ser-236 each coordinate Ca(2+). Catalysis depends on Asp-235, which acts as the Proton donor.

The protein belongs to the SMP-30/CGR1 family. Requires Ca(2+) as cofactor.

Its subcellular location is the cytoplasm. Functionally, exhibits lactonase activity. Acts in cells with perturbed membrane integrity and is possibly related to the membrane homeostasis. In Staphylococcus aureus (strain USA300), this protein is Lactonase drp35 (drp35).